Reading from the N-terminus, the 245-residue chain is MTDKKDTIFQNPGPAEDFEFNSRVVEVFDDMLDRSVPFYKEVIQASAQLLQRHLKENDSVYDLGSSTGTTLLELSRVLKRQDISYVGIDASKPMLEKARLKAELYSKGDQFSFLEEDITQFCHQEAGAVILHYTLQFIRPMQREEVMRRIYASLRPGGVLLLSEKTISHQKELNRDFISIYHHFKKDRGYSELEIAQKREALENVLIPFSQNENKNLLKKVGFECVESYFQWFNFSSFMAIKPQP.

Residues tyrosine 39, glycine 64–serine 66, aspartate 117–isoleucine 118, and arginine 199 contribute to the S-adenosyl-L-methionine site.

Belongs to the class I-like SAM-binding methyltransferase superfamily. Cx-SAM synthase family. Homodimer.

The catalysed reaction is prephenate + S-adenosyl-L-methionine = carboxy-S-adenosyl-L-methionine + 3-phenylpyruvate + H2O. Its function is as follows. Catalyzes the conversion of S-adenosyl-L-methionine (SAM) to carboxy-S-adenosyl-L-methionine (Cx-SAM). The polypeptide is Carboxy-S-adenosyl-L-methionine synthase (Desulfotalea psychrophila (strain LSv54 / DSM 12343)).